The sequence spans 151 residues: Small ribosomal subunit protein uS15 (151 aa).

At Ser32 the chain carries Phosphoserine. Residues Lys39 and Lys43 each participate in a glycyl lysine isopeptide (Lys-Gly) (interchain with G-Cter in ubiquitin) cross-link.

It belongs to the universal ribosomal protein uS15 family. In terms of assembly, component of the small ribosomal subunit (SSU). Mature yeast ribosomes consist of a small (40S) and a large (60S) subunit. The 40S small subunit contains 1 molecule of ribosomal RNA (18S rRNA) and 33 different proteins (encoded by 57 genes). The large 60S subunit contains 3 rRNA molecules (25S, 5.8S and 5S rRNA) and 46 different proteins (encoded by 81 genes).

It localises to the cytoplasm. Functionally, component of the ribosome, a large ribonucleoprotein complex responsible for the synthesis of proteins in the cell. The small ribosomal subunit (SSU) binds messenger RNAs (mRNAs) and translates the encoded message by selecting cognate aminoacyl-transfer RNA (tRNA) molecules. The large subunit (LSU) contains the ribosomal catalytic site termed the peptidyl transferase center (PTC), which catalyzes the formation of peptide bonds, thereby polymerizing the amino acids delivered by tRNAs into a polypeptide chain. The nascent polypeptides leave the ribosome through a tunnel in the LSU and interact with protein factors that function in enzymatic processing, targeting, and the membrane insertion of nascent chains at the exit of the ribosomal tunnel. In Saccharomyces cerevisiae (strain ATCC 204508 / S288c) (Baker's yeast), this protein is Small ribosomal subunit protein uS15.